The sequence spans 395 residues: Putative gustatory receptor 58a (395 aa).

Residues 1–32 lie on the Cytoplasmic side of the membrane; it reads MLLKFMYIYGIGCGLMPAPLKKGQFLLGYKQR. Residues 33-53 form a helical membrane-spanning segment; that stretch reads WYLIYTACLHGGLLTVLPFTF. Residues 54 to 72 are Extracellular-facing; that stretch reads PHYMYDDSYMSSNPVLKWT. Residues 73–93 form a helical membrane-spanning segment; sequence FNLTNITRIMAMFSGVLLMWF. Residues 94–131 lie on the Cytoplasmic side of the membrane; the sequence is RRKRILNLGENLILHCLKCKTLDNRSKKYSKLRKRVRN. Residues 132–152 traverse the membrane as a helical segment; the sequence is VLFQMLLVANLSILLGALILF. The Extracellular segment spans residues 153 to 169; the sequence is RIHSVQRISKTAMIVAH. Residues 170-190 form a helical membrane-spanning segment; sequence ITQFIYVVFMMTGICVILLVL. Over 191 to 250 the chain is Cytoplasmic; that stretch reads HWQSERLQIALKDLCSFLNHEERNSLTLSENKANRSLGKLAKLFKLFAENQRLVREVFRT. A helical membrane pass occupies residues 251 to 271; sequence FDLPIALLLLKMFVTNVNLVY. Topologically, residues 272-288 are extracellular; sequence HGVQFGNDTIETSSYTR. An N-linked (GlcNAc...) asparagine glycan is attached at Asn278. Residues 289–309 form a helical membrane-spanning segment; that stretch reads IVGQWVVISHYWSAVLLMNVV. At 310–366 the chain is on the cytoplasmic side; it reads DDVTRRSDLKMGDLLREFSHLELVKRDFHLQLELFSDHLRCHPSTYKVCGLFIFNKQ. The helical transmembrane segment at 367–387 threads the bilayer; that stretch reads TSLAYFFYVLVQVLVLVQFDL. Over 388 to 395 the chain is Extracellular; the sequence is KNKVEKRN.

It belongs to the insect chemoreceptor superfamily. Gustatory receptor (GR) family. Gr22e subfamily. In terms of tissue distribution, expressed in the adult labellar chemosensory neurons.

The protein resides in the cell membrane. Functionally, probable gustatory receptor which mediates acceptance or avoidance behavior, depending on its substrates. The polypeptide is Putative gustatory receptor 58a (Gr58a) (Drosophila melanogaster (Fruit fly)).